Reading from the N-terminus, the 160-residue chain is MTTFTHINSQGEANMVDVSAKAETVREARAEAIVTMSKETLAMIVEGKHHKGDVFATARIAGIQAAKRTWELIPLCHPLLLSKVEVNLEPLLETNRVRIQSLCKLTGKTGVEMEALTAVSVAALTIYDMCKAVQKDIVIEQVRLLEKSGGKSGHFVAEEK.

Residues 75–77 (LCH) and 113–114 (ME) each bind substrate. D128 is an active-site residue.

The protein belongs to the MoaC family. As to quaternary structure, homohexamer; trimer of dimers.

It carries out the reaction (8S)-3',8-cyclo-7,8-dihydroguanosine 5'-triphosphate = cyclic pyranopterin phosphate + diphosphate. It participates in cofactor biosynthesis; molybdopterin biosynthesis. In terms of biological role, catalyzes the conversion of (8S)-3',8-cyclo-7,8-dihydroguanosine 5'-triphosphate to cyclic pyranopterin monophosphate (cPMP). This is Cyclic pyranopterin monophosphate synthase from Haemophilus influenzae (strain PittEE).